The following is a 153-amino-acid chain: Ribonuclease H (153 aa).

Positions 1-142 (MRKKIEIFTD…CDELARIAAE (142 aa)) constitute an RNase H type-1 domain. Residues aspartate 10, glutamate 48, aspartate 70, and aspartate 134 each coordinate Mg(2+).

This sequence belongs to the RNase H family. Monomer. Requires Mg(2+) as cofactor.

It localises to the cytoplasm. The enzyme catalyses Endonucleolytic cleavage to 5'-phosphomonoester.. Its function is as follows. Endonuclease that specifically degrades the RNA of RNA-DNA hybrids. This chain is Ribonuclease H, found in Baumannia cicadellinicola subsp. Homalodisca coagulata.